A 334-amino-acid polypeptide reads, in one-letter code: SH3 and cysteine-rich domain-containing protein 3 (334 aa).

The disordered stretch occupies residues 1–26; it reads MAQYDQLEDKDSLDIHDNPPAPENVV. Basic and acidic residues predominate over residues 7-17; that stretch reads LEDKDSLDIHD. The Phorbol-ester/DAG-type zinc-finger motif lies at 62–113; the sequence is PHKFKDHYCKKPKFCDVCARMIVLNNKFALRCKNCKTNIHHSCQSYVQFQRC. Residues 178 to 190 are compositionally biased toward acidic residues; the sequence is EEEAQQPKEDEEG. Positions 178-215 are disordered; that stretch reads EEEAQQPKEDEEGAEGKQDGDKKDKTATDDKNKKQQQT. The segment covering 191–210 has biased composition (basic and acidic residues); it reads AEGKQDGDKKDKTATDDKNK. 2 consecutive SH3 domains span residues 217–276 and 277–334; these read SQSH…RVRA and GERV…LHEL.

In terms of assembly, component of a calcium channel complex with CACNA1S. In terms of tissue distribution, expressed in muscles at the muscle triad.

The protein localises to the cytoplasm. Its subcellular location is the cell membrane. The protein resides in the sarcolemma. It is found in the T-tubule. Its function is as follows. Required for normal excitation-contraction coupling in skeletal muscle and for normal muscle contraction in response to membrane depolarization. Required for normal Ca(2+) release from the sarcplasmic reticulum, which ultimately leads to muscle contraction. Probably functions via its effects on muscle calcium channels. Increases CACNA1S channel activity, in addition to its role in enhancing the expression of CACNA1S at the cell membrane. Has a redundant role in promoting the expression of the calcium channel CACNA1S at the cell membrane. The sequence is that of SH3 and cysteine-rich domain-containing protein 3 from Danio rerio (Zebrafish).